The sequence spans 592 residues: Bifunctional purine biosynthesis protein ATIC (592 aa).

N-acetylmethionine is present on Met-1. The 146-residue stretch at Met-1–Cys-146 folds into the MGS-like domain. Positions Met-1–Ser-198 are IMP cyclohydrolase. Residues Ser-12–Lys-14, Ser-34–Thr-37, Arg-64–Thr-67, Cys-101–Asn-102, and Asp-125–Ile-126 each bind IMP. Lys-137 acts as the Proton donor/acceptor; for FAICAR cyclization activity in catalysis. At Lys-199 the chain carries N6-acetyllysine. An AICAR formyltransferase region spans residues Lys-199–His-592. 5-amino-1-(5-phospho-beta-D-ribosyl)imidazole-4-carboxamide contacts are provided by residues Arg-207–Tyr-208, His-267, Gly-316, Asp-339, Asn-431, and Arg-451. The Proton acceptor; for AICAR formyltransferase activity role is filled by His-267. Position 452 (Ile-452) interacts with (6R)-10-formyltetrahydrofolate. Phe-541 is a binding site for 5-amino-1-(5-phospho-beta-D-ribosyl)imidazole-4-carboxamide. (6R)-10-formyltetrahydrofolate contacts are provided by residues Asp-546 and Ser-565–Ala-566. Arg-588 lines the 5-amino-1-(5-phospho-beta-D-ribosyl)imidazole-4-carboxamide pocket.

The protein belongs to the PurH family. As to quaternary structure, homodimer. Associates with internalized INSR complexes on Golgi/endosomal membranes. Interacts with INSR; ATIC together with PRKAA2/AMPK2 and HACD3/PTPLAD1 is proposed to be part of a signaling network regulating INSR autophosphorylation and endocytosis.

The protein localises to the cytoplasm. The protein resides in the cytosol. The enzyme catalyses (6R)-10-formyltetrahydrofolate + 5-amino-1-(5-phospho-beta-D-ribosyl)imidazole-4-carboxamide = 5-formamido-1-(5-phospho-D-ribosyl)imidazole-4-carboxamide + (6S)-5,6,7,8-tetrahydrofolate. It carries out the reaction 10-formyldihydrofolate + 5-amino-1-(5-phospho-beta-D-ribosyl)imidazole-4-carboxamide = 5-formamido-1-(5-phospho-D-ribosyl)imidazole-4-carboxamide + 7,8-dihydrofolate. The catalysed reaction is IMP + H2O = 5-formamido-1-(5-phospho-D-ribosyl)imidazole-4-carboxamide. It functions in the pathway purine metabolism; IMP biosynthesis via de novo pathway; 5-formamido-1-(5-phospho-D-ribosyl)imidazole-4-carboxamide from 5-amino-1-(5-phospho-D-ribosyl)imidazole-4-carboxamide (10-formyl THF route): step 1/1. The protein operates within purine metabolism; IMP biosynthesis via de novo pathway; IMP from 5-formamido-1-(5-phospho-D-ribosyl)imidazole-4-carboxamide: step 1/1. With respect to regulation, AMP and XMP inhibit AICAR formyltransferase activity. Its function is as follows. Bifunctional enzyme that catalyzes the last two steps of purine biosynthesis. Acts as a transformylase that incorporates a formyl group to the AMP analog AICAR (5-amino-1-(5-phospho-beta-D-ribosyl)imidazole-4-carboxamide) to produce the intermediate formyl-AICAR (FAICAR). Can use both 10-formyldihydrofolate and 10-formyltetrahydrofolate as the formyl donor in this reaction. Also catalyzes the cyclization of FAICAR to inosine monophosphate (IMP). Promotes insulin receptor/INSR autophosphorylation and is involved in INSR internalization. The protein is Bifunctional purine biosynthesis protein ATIC (ATIC) of Pongo abelii (Sumatran orangutan).